We begin with the raw amino-acid sequence, 426 residues long: DNA primase DnaG (426 aa).

In terms of domain architecture, Toprim spans 171–245; it reads DTVILVEGRA…KVDFVARAPP (75 aa). Residues E177, D219, and D221 each coordinate Mg(2+). The disordered stretch occupies residues 407 to 426; that stretch reads KSEENIQESVSTGESAQTSP. The span at 413–426 shows a compositional bias: polar residues; that stretch reads QESVSTGESAQTSP.

This sequence belongs to the archaeal DnaG primase family. As to quaternary structure, forms a ternary complex with MCM helicase and DNA. Component of the archaeal exosome complex. The cofactor is Mg(2+).

The enzyme catalyses ssDNA + n NTP = ssDNA/pppN(pN)n-1 hybrid + (n-1) diphosphate.. RNA polymerase that catalyzes the synthesis of short RNA molecules used as primers for DNA polymerase during DNA replication. Also part of the exosome, which is a complex involved in RNA degradation. Acts as a poly(A)-binding protein that enhances the interaction between heteromeric, adenine-rich transcripts and the exosome. In Thermofilum pendens (strain DSM 2475 / Hrk 5), this protein is DNA primase DnaG.